Consider the following 750-residue polypeptide: Photosystem I P700 chlorophyll a apoprotein A1 (750 aa).

8 consecutive transmembrane segments (helical) span residues 70–93, 156–179, 195–219, 291–309, 346–369, 385–411, 433–455, and 531–549; these read VFSAHFGQLSIIFLWLSGMYFHGA, LYCTGIGALVCAALMLFAGWFHYH, LNHHLAGLLGLGSLSWAGHQVHVSL, IAHHHLAIAILFLIAGHMY, WHAQLSLNLAMLGSLTIIVAHHMY, LSLFTHHMWIGGFLIVGAAAHAAIFMV, AIISHLNWVCIFLGFHSFGLYIH, and FLVHHIHAFTIHVPVLILL. [4Fe-4S] cluster contacts are provided by Cys-573 and Cys-582. Transmembrane regions (helical) follow at residues 589-610 and 664-686; these read HVFLGLFWMYNAISVVIFHFSW and LSAYGLFFLGAHFVWAFSLMFLF. Position 675 (His-675) interacts with chlorophyll a'. Positions 683 and 691 each coordinate chlorophyll a. Trp-692 is a binding site for phylloquinone. Residues 724–744 traverse the membrane as a helical segment; sequence AVGVTHYLLGGIATTWAFFLA.

The protein belongs to the PsaA/PsaB family. The PsaA/B heterodimer binds the P700 chlorophyll special pair and subsequent electron acceptors. PSI consists of a core antenna complex that captures photons, and an electron transfer chain that converts photonic excitation into a charge separation. The eukaryotic PSI reaction center is composed of at least 11 subunits. P700 is a chlorophyll a/chlorophyll a' dimer, A0 is one or more chlorophyll a, A1 is one or both phylloquinones and FX is a shared 4Fe-4S iron-sulfur center. is required as a cofactor.

It localises to the plastid. The protein localises to the chloroplast thylakoid membrane. The catalysed reaction is reduced [plastocyanin] + hnu + oxidized [2Fe-2S]-[ferredoxin] = oxidized [plastocyanin] + reduced [2Fe-2S]-[ferredoxin]. Its function is as follows. PsaA and PsaB bind P700, the primary electron donor of photosystem I (PSI), as well as the electron acceptors A0, A1 and FX. PSI is a plastocyanin-ferredoxin oxidoreductase, converting photonic excitation into a charge separation, which transfers an electron from the donor P700 chlorophyll pair to the spectroscopically characterized acceptors A0, A1, FX, FA and FB in turn. Oxidized P700 is reduced on the lumenal side of the thylakoid membrane by plastocyanin. This is Photosystem I P700 chlorophyll a apoprotein A1 from Crucihimalaya wallichii (Rock-cress).